A 266-amino-acid polypeptide reads, in one-letter code: Protein phosphatase 1 regulatory subunit 35 (266 aa).

Polar residues predominate over residues 1–10 (MMVYNGSQLE). The segment at 1–118 (MMVYNGSQLE…QDLGTPVQQS (118 aa)) is disordered. Pro residues predominate over residues 21 to 38 (PGPPPEPRAPEPGAPVPE). Residues S46 and S51 each carry the phosphoserine modification. Over residues 62 to 79 (GRRKGRADRRGGARKGRQ) the composition is skewed to basic residues. Pro residues predominate over residues 86–97 (PPSPVRSGPPPA).

Belongs to the PPP1R35 family. In terms of assembly, interacts with PPP1CA; this interaction mediates the PPP1CA phosphatase activity inhibition. Interacts with RTTN; this interaction allows the mutual recruitment to the centriole.

It localises to the cytoplasm. Its subcellular location is the cytoskeleton. It is found in the microtubule organizing center. The protein localises to the centrosome. The protein resides in the centriole. During centriole duplication, plays a role in the centriole elongation by promoting the recruitment of the microtubule-binding elongation machinery through its interaction with RTTN, leading to the centriole to centrosome conversion. In addition may play a role in the primary cilia assembly. This chain is Protein phosphatase 1 regulatory subunit 35, found in Bos taurus (Bovine).